The sequence spans 437 residues: GTPase Der (437 aa).

2 consecutive EngA-type G domains span residues 3–167 (NLVA…NKET) and 176–352 (PRFA…ENRT). Residues 9–16 (GRPNVGKS), 56–60 (DTGGW), 119–122 (NKTD), 182–189 (GRPNAGKS), 229–233 (DTAGI), and 294–297 (NKWD) contribute to the GTP site. Positions 353–437 (TKIPTARLNE…TPINIYIRQK (85 aa)) constitute a KH-like domain.

It belongs to the TRAFAC class TrmE-Era-EngA-EngB-Septin-like GTPase superfamily. EngA (Der) GTPase family. In terms of assembly, associates with the 50S ribosomal subunit.

Its function is as follows. GTPase that plays an essential role in the late steps of ribosome biogenesis. This chain is GTPase Der, found in Bacteroides thetaiotaomicron (strain ATCC 29148 / DSM 2079 / JCM 5827 / CCUG 10774 / NCTC 10582 / VPI-5482 / E50).